A 315-amino-acid chain; its full sequence is Ferrochelatase (315 aa).

The Fe cation site is built by H193 and E273.

Belongs to the ferrochelatase family.

The protein resides in the cytoplasm. The catalysed reaction is heme b + 2 H(+) = protoporphyrin IX + Fe(2+). The protein operates within porphyrin-containing compound metabolism; protoheme biosynthesis; protoheme from protoporphyrin-IX: step 1/1. Its function is as follows. Catalyzes the ferrous insertion into protoporphyrin IX. The polypeptide is Ferrochelatase (Wolbachia pipientis wMel).